The sequence spans 385 residues: tRNA-specific 2-thiouridylase MnmA (385 aa).

ATP contacts are provided by residues 12-19 (GLSGGVDS) and Met-38. Positions 108–110 (NPD) are interaction with target base in tRNA. The Nucleophile role is filled by Cys-113. Cysteines 113 and 210 form a disulfide. Position 138 (Gly-138) interacts with ATP. An interaction with tRNA region spans residues 160–162 (KDQ). The active-site Cysteine persulfide intermediate is Cys-210.

This sequence belongs to the MnmA/TRMU family.

The protein localises to the cytoplasm. The enzyme catalyses S-sulfanyl-L-cysteinyl-[protein] + uridine(34) in tRNA + AH2 + ATP = 2-thiouridine(34) in tRNA + L-cysteinyl-[protein] + A + AMP + diphosphate + H(+). Catalyzes the 2-thiolation of uridine at the wobble position (U34) of tRNA, leading to the formation of s(2)U34. In Ureaplasma parvum serovar 3 (strain ATCC 27815 / 27 / NCTC 11736), this protein is tRNA-specific 2-thiouridylase MnmA.